We begin with the raw amino-acid sequence, 851 residues long: DNA mismatch repair protein MutS (851 aa).

Residue 602-609 (GPNMSGKS) participates in ATP binding.

This sequence belongs to the DNA mismatch repair MutS family.

Its function is as follows. This protein is involved in the repair of mismatches in DNA. It is possible that it carries out the mismatch recognition step. This protein has a weak ATPase activity. This is DNA mismatch repair protein MutS from Streptococcus equi subsp. equi (strain 4047).